Here is a 169-residue protein sequence, read N- to C-terminus: MERAIFAGGCFWCMVQPFEEQAGILSVRSGYTGGHVHNPSYEQVCSKTTGHTEAVEIIFDPSLISYSDLVELYWAQTDPTDAFGQFEDRGDNYRPVIYYTDERQREIAERSKQTLQASGRFDQPIVTSIEPAEPFYLAEDYHQGFYQKNPERYAQSSAIRHQFLEEHWQ.

The active site involves Cys-10.

The protein belongs to the MsrA Met sulfoxide reductase family.

It catalyses the reaction L-methionyl-[protein] + [thioredoxin]-disulfide + H2O = L-methionyl-(S)-S-oxide-[protein] + [thioredoxin]-dithiol. The enzyme catalyses [thioredoxin]-disulfide + L-methionine + H2O = L-methionine (S)-S-oxide + [thioredoxin]-dithiol. Has an important function as a repair enzyme for proteins that have been inactivated by oxidation. Catalyzes the reversible oxidation-reduction of methionine sulfoxide in proteins to methionine. The protein is Peptide methionine sulfoxide reductase MsrA of Streptococcus equi subsp. equi (strain 4047).